We begin with the raw amino-acid sequence, 322 residues long: Pyrroline-5-carboxylate reductase (322 aa).

The next 2 membrane-spanning stretches (helical) occupy residues 9–29 and 117–137; these read YPNVAILGCGKLGQALLVGLL and ILISLMGGVSPGLIVEALHFW. The disordered stretch occupies residues 302–322; the sequence is LSQSAGSHGEDNTTDSKTSRA. N-linked (GlcNAc...) asparagine glycosylation is present at N313.

It belongs to the pyrroline-5-carboxylate reductase family.

The protein resides in the membrane. The enzyme catalyses L-proline + NADP(+) = (S)-1-pyrroline-5-carboxylate + NADPH + 2 H(+). The catalysed reaction is L-proline + NAD(+) = (S)-1-pyrroline-5-carboxylate + NADH + 2 H(+). Its pathway is alkaloid biosynthesis. Pyrroline-5-carboxylate reductase; part of the gene cluster that mediates the biosynthesis of paraherquamide, a fungal indole alkaloid that belongs to a family of natural products containing a characteristic bicyclo[2.2.2]diazaoctane core. The first steps in the biosynthesis of paraherquamide is the production of the beta-methyl-proline precursor from L-isoleucine. They require oxidation of a terminally hydroxylated L-isoleucine to the corresponding aldehyde by enzymes which have still to be identified. Spontaneous cyclization and dehydration would yield the 4-methyl pyrolline-5-carboxylic acid, which is then reduced by the pyrroline-5-carboxylate reductase phqD leading to the beta-methyl-proline precursor. The next step of paraherquamide biosynthesis involves coupling of beta-methyl-proline and L-tryptophan by the bimodular NRPS phqB, to produce a monooxopiperazine intermediate. The reductase (R) domain of phqB utilizes NADPH for hydride transfer to reduce the thioester bond of the T domain-tethered linear dipeptide to a hemithioaminal intermediate, which spontaneously cleaves the C-S bond to release the aldehyde product. This compound undergoes spontaneous cyclization and dehydration to give a dienamine which is reverse prenylated at C-2 by the reverse prenyltransferase phqJ. The other prenyltransferase present in the cluster, phqI may be a redundant gene in the pathway. During biosynthetic assembly, the key step to produce the polycyclic core is catalyzed by the bifunctional reductase and intramolecular [4+2] Diels-Alderase, phqE, resulting in formation of the [2.2.2] diazaoctane intermediate preparaherquamide. Following formation of preparaherquamide, an indole 2,3-epoxidation-initiated pinacol-like rearrangement is catalyzed by the phqK FAD-dependent monooxygenase. The prenyltransferase phqA, the cytochrome P450 monooxygenase phqL, and the FAD-linked oxidoreductase phqH (or the cytochrome P450 monooxygenase phqM), are proposed to be involved in the formation of the pyran ring. The FAD-dependent monooxygenase phqK is likely responsible for generation of the spiro-oxindole, and the N-methylation is likely mediated by the phqN methyltransferase leading to the isolable natural product paraherquamide F. However, the order of these biosynthetic steps has still to be determined. In late-stage paraherquamide biosynthesis, the third P450 monooxygenase, phqO, is probably responsible for the C-14 hydroxylation, transforming paraherquamide F to paraherquamide G, and paraherquamide E to the final product paraherquamide A. The expansion from the 6-membered ring pyran (in paraherquamides F and G) to the 7-membered dioxepin ring (in paraherquamides A and E) represents a poorly understood but intriguing process that probably involves the 2-oxoglutarate-dependent dioxygenase phqC. Finally, the remaining members of the paraherquamide cluster, including phqI as well as phqM (or phqH), do not have a clearly prescribed role and appear to be redundant. In Penicillium fellutanum, this protein is Pyrroline-5-carboxylate reductase.